The sequence spans 553 residues: Methyl-coenzyme M reductase II subunit alpha (553 aa).

Residue Gln150 coordinates coenzyme F430. Residues Arg228, 259–260, and Arg273 each bind coenzyme B; that span reads KH. A Pros-methylhistidine modification is found at His260. Arg274 bears the 5-methylarginine mark. Tyr335 lines the coenzyme M pocket. 2-methylglutamine is present on Gln402. Tyr446 provides a ligand contact to coenzyme M. Gly447 is subject to 1-thioglycine. A (Z)-2,3-didehydroaspartate modification is found at Asp452. Residue Cys454 is modified to S-methylcysteine.

It belongs to the methyl-coenzyme M reductase alpha subunit family. As to quaternary structure, MCR is a hexamer of two alpha, two beta, and two gamma chains, forming a dimer of heterotrimers. Requires coenzyme F430 as cofactor. Post-translationally, the alpha subunit contains six modified amino acids near the active site region. Is methylated on His-260, Arg-274, Gln-402 and Cys-454, probably by the action of specific S-adenosylmethionine-dependent methyltransferases. Also contains a thioglycine at position 447, forming a thiopeptide bond. Contains a didehydroaspartate residue at position 452. The methylation on C5 of Arg-274 is a post-translational methylation not essential in vivo, but which plays a role for the stability and structural integrity of MCR.

It carries out the reaction coenzyme B + methyl-coenzyme M = methane + coenzyme M-coenzyme B heterodisulfide. The protein operates within one-carbon metabolism; methyl-coenzyme M reduction; methane from methyl-coenzyme M: step 1/1. In terms of biological role, component of the methyl-coenzyme M reductase (MCR) I that catalyzes the reductive cleavage of methyl-coenzyme M (CoM-S-CH3 or 2-(methylthio)ethanesulfonate) using coenzyme B (CoB or 7-mercaptoheptanoylthreonine phosphate) as reductant which results in the production of methane and the mixed heterodisulfide of CoB and CoM (CoM-S-S-CoB). This is the final step in methanogenesis. The protein is Methyl-coenzyme M reductase II subunit alpha (mrtA) of Methanothermobacter thermautotrophicus (strain ATCC 29096 / DSM 1053 / JCM 10044 / NBRC 100330 / Delta H) (Methanobacterium thermoautotrophicum).